A 289-amino-acid polypeptide reads, in one-letter code: ATP synthase gamma chain (289 aa).

Belongs to the ATPase gamma chain family. In terms of assembly, F-type ATPases have 2 components, CF(1) - the catalytic core - and CF(0) - the membrane proton channel. CF(1) has five subunits: alpha(3), beta(3), gamma(1), delta(1), epsilon(1). CF(0) has three main subunits: a, b and c.

It localises to the cell membrane. Its function is as follows. Produces ATP from ADP in the presence of a proton gradient across the membrane. The gamma chain is believed to be important in regulating ATPase activity and the flow of protons through the CF(0) complex. The protein is ATP synthase gamma chain of Alkaliphilus metalliredigens (strain QYMF).